Reading from the N-terminus, the 221-residue chain is Pyridoxine/pyridoxamine 5'-phosphate oxidase (221 aa).

Residues 14 to 17 and Lys73 contribute to the substrate site; that span reads RNEY. Residues 68-73, 83-84, Lys90, and Gln112 each bind FMN; these read RTVLLK and FT. Tyr130, Arg134, and Ser138 together coordinate substrate. FMN is bound by residues 147–148 and Trp193; that span reads QS. Residue 199–201 participates in substrate binding; it reads RLH. Arg203 is a binding site for FMN.

This sequence belongs to the pyridoxamine 5'-phosphate oxidase family. As to quaternary structure, homodimer. It depends on FMN as a cofactor.

It catalyses the reaction pyridoxamine 5'-phosphate + O2 + H2O = pyridoxal 5'-phosphate + H2O2 + NH4(+). The catalysed reaction is pyridoxine 5'-phosphate + O2 = pyridoxal 5'-phosphate + H2O2. It functions in the pathway cofactor metabolism; pyridoxal 5'-phosphate salvage; pyridoxal 5'-phosphate from pyridoxamine 5'-phosphate: step 1/1. It participates in cofactor metabolism; pyridoxal 5'-phosphate salvage; pyridoxal 5'-phosphate from pyridoxine 5'-phosphate: step 1/1. In terms of biological role, catalyzes the oxidation of either pyridoxine 5'-phosphate (PNP) or pyridoxamine 5'-phosphate (PMP) into pyridoxal 5'-phosphate (PLP). In Salinispora arenicola (strain CNS-205), this protein is Pyridoxine/pyridoxamine 5'-phosphate oxidase.